The primary structure comprises 187 residues: PRA1 family protein G1 (187 aa).

3 helical membrane passes run 84-104 (LFLI…AMWL), 125-145 (VIVF…NSLQ), and 146-166 (CLIL…IIRN).

Belongs to the PRA1 family. Expressed in roots and lateral roots.

It is found in the endosome membrane. Its function is as follows. May be involved in both secretory and endocytic intracellular trafficking in the endosomal/prevacuolar compartments. The polypeptide is PRA1 family protein G1 (PRA1G1) (Arabidopsis thaliana (Mouse-ear cress)).